The primary structure comprises 56 residues: UPF0434 protein ECH_0194 (56 aa).

This sequence belongs to the UPF0434 family.

This chain is UPF0434 protein ECH_0194, found in Ehrlichia chaffeensis (strain ATCC CRL-10679 / Arkansas).